The sequence spans 491 residues: UDP-N-acetylmuramate--L-alanine ligase (491 aa).

126–132 (GTHGKTT) is a binding site for ATP.

Belongs to the MurCDEF family.

It is found in the cytoplasm. It catalyses the reaction UDP-N-acetyl-alpha-D-muramate + L-alanine + ATP = UDP-N-acetyl-alpha-D-muramoyl-L-alanine + ADP + phosphate + H(+). It functions in the pathway cell wall biogenesis; peptidoglycan biosynthesis. Functionally, cell wall formation. The sequence is that of UDP-N-acetylmuramate--L-alanine ligase from Salmonella typhimurium (strain LT2 / SGSC1412 / ATCC 700720).